Consider the following 85-residue polypeptide: UPF0291 protein SSA_1878 (85 aa).

A disordered region spans residues 58–85; it reads GNDVTPEKLRQVQREKGLHGRSLDDPES. Basic and acidic residues predominate over residues 62–85; that stretch reads TPEKLRQVQREKGLHGRSLDDPES.

The protein belongs to the UPF0291 family.

The protein resides in the cytoplasm. This Streptococcus sanguinis (strain SK36) protein is UPF0291 protein SSA_1878.